The following is a 291-amino-acid chain: ATP synthase gamma chain (291 aa).

It belongs to the ATPase gamma chain family. F-type ATPases have 2 components, CF(1) - the catalytic core - and CF(0) - the membrane proton channel. CF(1) has five subunits: alpha(3), beta(3), gamma(1), delta(1), epsilon(1). CF(0) has three main subunits: a, b and c.

Its subcellular location is the cell membrane. Produces ATP from ADP in the presence of a proton gradient across the membrane. The gamma chain is believed to be important in regulating ATPase activity and the flow of protons through the CF(0) complex. The chain is ATP synthase gamma chain from Streptococcus pyogenes serotype M3 (strain ATCC BAA-595 / MGAS315).